Here is a 315-residue protein sequence, read N- to C-terminus: Putative heme-binding peroxidase (315 aa).

Residue His-40 is the Proton acceptor of the active site. His-169 serves as a coordination point for heme b. Trp-185 serves as the catalytic Tryptophan radical intermediate. The interval 267–286 (EEGKPLDKTAPPAGDETCPV) is disordered.

Belongs to the peroxidase family. Cytochrome c peroxidase subfamily. Requires heme b as cofactor.

Functionally, destroys radicals which are normally produced within the cells and which are toxic to biological systems. This Cryptococcus neoformans var. neoformans serotype D (strain B-3501A) (Filobasidiella neoformans) protein is Putative heme-binding peroxidase.